A 172-amino-acid polypeptide reads, in one-letter code: Protein 3 (172 aa).

This chain is Protein 3 (3), found in Northern cereal mosaic virus (NCMV).